We begin with the raw amino-acid sequence, 244 residues long: L-xylulose reductase (244 aa).

Met-1 carries the N-acetylmethionine modification. Position 11-40 (11-40 (LVTGAGKGIGRGTVQALHATGARVVAVSRT)) interacts with NADP(+). Arg-21 carries the post-translational modification Omega-N-methylarginine. A Phosphoserine modification is found at Ser-46. Ser-136 serves as a coordination point for substrate. Tyr-149 functions as the Proton acceptor in the catalytic mechanism. An NADP(+)-binding site is contributed by Lys-153.

It belongs to the short-chain dehydrogenases/reductases (SDR) family. As to quaternary structure, homotetramer. As to expression, highly expressed in kidney, liver and epididymis. In the epididymis, it is mainly expressed in the proximal and distal sections of the corpus region. Weakly or not expressed in brain, lung, heart, spleen and testis.

The protein resides in the membrane. It carries out the reaction xylitol + NADP(+) = L-xylulose + NADPH + H(+). Catalyzes the NADPH-dependent reduction of several pentoses, tetroses, trioses, alpha-dicarbonyl compounds and L-xylulose. Participates in the uronate cycle of glucose metabolism. May play a role in the water absorption and cellular osmoregulation in the proximal renal tubules by producing xylitol, an osmolyte, thereby preventing osmolytic stress from occurring in the renal tubules. In Homo sapiens (Human), this protein is L-xylulose reductase (DCXR).